The primary structure comprises 91 residues: Elongation factor 1-beta (91 aa).

It belongs to the EF-1-beta/EF-1-delta family.

In terms of biological role, promotes the exchange of GDP for GTP in EF-1-alpha/GDP, thus allowing the regeneration of EF-1-alpha/GTP that could then be used to form the ternary complex EF-1-alpha/GTP/AAtRNA. In Pyrococcus abyssi (strain GE5 / Orsay), this protein is Elongation factor 1-beta (ef1b).